We begin with the raw amino-acid sequence, 520 residues long: Peptide chain release factor 3 (520 aa).

One can recognise a tr-type G domain in the interval 8 to 277; that stretch reads ESRKTFAIIS…FAPMPNARQT (270 aa). Residues 17–24, 85–89, and 139–142 each bind GTP; these read SHPDAGKT, DTPGH, and NKLD.

It belongs to the TRAFAC class translation factor GTPase superfamily. Classic translation factor GTPase family. PrfC subfamily.

The protein localises to the cytoplasm. Increases the formation of ribosomal termination complexes and stimulates activities of RF-1 and RF-2. It binds guanine nucleotides and has strong preference for UGA stop codons. It may interact directly with the ribosome. The stimulation of RF-1 and RF-2 is significantly reduced by GTP and GDP, but not by GMP. This chain is Peptide chain release factor 3, found in Staphylococcus aureus (strain JH1).